Consider the following 759-residue polypeptide: Subtilisin-like serine-protease S (759 aa).

The signal sequence occupies residues 1 to 22 (MGSAKILSFTLLLFVGYTLVHG). In terms of domain architecture, Inhibitor I9 spans 28–105 (YIVYMGDRSH…SVFESKMNKL (78 aa)). The Peptidase S8 domain occupies 110–613 (SWDFLGLDTV…SGHVNPVASL (504 aa)). The active-site Charge relay system is aspartate 139. Residue asparagine 170 is glycosylated (N-linked (GlcNAc...) asparagine). Catalysis depends on histidine 215, which acts as the Charge relay system. N-linked (GlcNAc...) asparagine glycosylation is found at asparagine 230 and asparagine 388. The PA domain maps to 390–462 (SFCKEHTLDP…MIGQDAVEEL (73 aa)). The Charge relay system role is filled by serine 545. N-linked (GlcNAc...) asparagine glycans are attached at residues asparagine 593, asparagine 642, and asparagine 671.

Belongs to the peptidase S8 family.

It is found in the secreted. The protein resides in the extracellular space. Its subcellular location is the apoplast. Its function is as follows. Required for arbuscular mycorrhiza (AM) development during AM symbiosis with AM fungi (e.g. Glomeromycota intraradices). This chain is Subtilisin-like serine-protease S, found in Lotus japonicus (Lotus corniculatus var. japonicus).